Reading from the N-terminus, the 416-residue chain is Tryptophan synthase beta chain (416 aa).

Residue lysine 109 is modified to N6-(pyridoxal phosphate)lysine.

This sequence belongs to the TrpB family. Tetramer of two alpha and two beta chains. Requires pyridoxal 5'-phosphate as cofactor.

It catalyses the reaction (1S,2R)-1-C-(indol-3-yl)glycerol 3-phosphate + L-serine = D-glyceraldehyde 3-phosphate + L-tryptophan + H2O. Its pathway is amino-acid biosynthesis; L-tryptophan biosynthesis; L-tryptophan from chorismate: step 5/5. Functionally, the beta subunit is responsible for the synthesis of L-tryptophan from indole and L-serine. The sequence is that of Tryptophan synthase beta chain from Mesorhizobium japonicum (strain LMG 29417 / CECT 9101 / MAFF 303099) (Mesorhizobium loti (strain MAFF 303099)).